Here is a 340-residue protein sequence, read N- to C-terminus: 3-isopropylmalate dehydrogenase (340 aa).

Residues Arg-88, Arg-98, Arg-122, and Asp-212 each contribute to the substrate site. 3 residues coordinate Mg(2+): Asp-212, Asp-236, and Asp-240. Position 272–284 (272–284 (GSAPDIAGQGIAD)) interacts with NAD(+).

The protein belongs to the isocitrate and isopropylmalate dehydrogenases family. LeuB type 2 subfamily. In terms of assembly, homodimer. It depends on Mg(2+) as a cofactor. The cofactor is Mn(2+).

It is found in the cytoplasm. The catalysed reaction is (2R,3S)-3-isopropylmalate + NAD(+) = 4-methyl-2-oxopentanoate + CO2 + NADH. The protein operates within amino-acid biosynthesis; L-leucine biosynthesis; L-leucine from 3-methyl-2-oxobutanoate: step 3/4. Catalyzes the oxidation of 3-carboxy-2-hydroxy-4-methylpentanoate (3-isopropylmalate) to 3-carboxy-4-methyl-2-oxopentanoate. The product decarboxylates to 4-methyl-2 oxopentanoate. This Corynebacterium glutamicum (strain ATCC 13032 / DSM 20300 / JCM 1318 / BCRC 11384 / CCUG 27702 / LMG 3730 / NBRC 12168 / NCIMB 10025 / NRRL B-2784 / 534) protein is 3-isopropylmalate dehydrogenase (leuB).